Here is a 534-residue protein sequence, read N- to C-terminus: Ulvan lyase NLR42 (534 aa).

The first 47 residues, 1 to 47, serve as a signal peptide directing secretion; it reads MVFFKDLFIFKSLIKGSLYSGHMKKKLLNYLPLFALMLFTVSMMAQT. The cysteines at positions 59 and 89 are disulfide-linked. Residues Gly63, Asn68, Asp86, Thr88, Ala91, and Asp92 each coordinate Ca(2+). A substrate-binding site is contributed by Tyr164. Lys169 acts as the Proton acceptor in catalysis. Residues 218 to 223 and 288 to 291 contribute to the substrate site; these read SGAAGR and YRVK. Tyr288 acts as the Proton donor/acceptor in catalysis. Residues 316–449 are ulvan-binding domain; sequence PAADIYRIKN…SKWNLESTTL (134 aa). The propeptide at 450–534 is removed by the type IX secretion system (T9SS); that stretch reads SVDSQQIASV…KVYQTKLIVN (85 aa).

The protein belongs to the polysaccharide lyase 28 family. It depends on Ca(2+) as a cofactor.

The protein resides in the secreted. Its function is as follows. Ulvan lyase involved in ulvan degradation. Ulvan is the main polysaccharide component of the Ulvales (green seaweed) cell wall. It is composed of disaccharide building blocks comprising 3-sulfated rhamnose (Rha3S) linked to D-glucuronic acid (GlcA), L-iduronic acid (IduA), or D-xylose (Xyl). Ulvan lyase catalyzes the endolytic cleavage of the glycosidic bond between Rha3S and the uronic acids GlcA or IduA, producing oligosaccharides that have unsaturated 4-deoxy-L-threo-hex-4-enopyranosiduronic acid (deltaUA) at the non-reducing end. This results eventually in the degradation of the ulvan polysaccharide into deltaUA-Rha3S disaccharides and deltaUA-Rha3S-Xyl-Rha3S tetrasaccharides. In Nonlabens ulvanivorans (Persicivirga ulvanivorans), this protein is Ulvan lyase NLR42.